The following is a 540-amino-acid chain: 2,3-bisphosphoglycerate-independent phosphoglycerate mutase (540 aa).

Mn(2+) is bound by residues Asp-13 and Ser-63. Ser-63 (phosphoserine intermediate) is an active-site residue. Residues His-124, 154-155 (RD), Arg-186, Arg-192, 262-265 (RPDR), and Lys-356 each bind substrate. Mn(2+)-binding residues include Asp-423, His-427, Asp-464, His-465, and His-483.

The protein belongs to the BPG-independent phosphoglycerate mutase family. Monomer. Mn(2+) is required as a cofactor.

It carries out the reaction (2R)-2-phosphoglycerate = (2R)-3-phosphoglycerate. Its pathway is carbohydrate degradation; glycolysis; pyruvate from D-glyceraldehyde 3-phosphate: step 3/5. Functionally, catalyzes the interconversion of 2-phosphoglycerate and 3-phosphoglycerate. The protein is 2,3-bisphosphoglycerate-independent phosphoglycerate mutase of Chloroflexus aurantiacus (strain ATCC 29366 / DSM 635 / J-10-fl).